The sequence spans 694 residues: MNDPRSKMMISPGLLPTESLLDSLILISNEVSSMQKFPLVQIKNVSSMIRRIKLLSSLFEEIQESDSPLPPSSILCFIEIFSVITRVKVLIQECTDGSSLWSLIQLDFISNQFFVLVKEMGRALDILPLNLLNVAQDIKEQVDLLHKQSKRVELELFIDPREVQRRENLFEVMSKNCLQNKKTNNNKGFIDFVKVEEIMCSIGLRTLSDYVEEISKLEVEAQNQAGTGGLIVVSNINNLMSLVSYTKSMVFRNDGESEECKPISMFLYNKSKIHDNDSSSSSSFSQSMMTVNIPDEFRCPISLDLMRDPVIVSSGHTYDRISIAEWINSGHHTCPKSGQRLIHTALIPNYALKSLVHQWCYENNVKMNEAITKNNNSSSKRHKNENAIDHISENKASKDAVKMTAEFLVGKLATGSTDIQRQSAYEIRLLAKTGMDNRRIIAEVGAIPFLVTLLVSKDSRIQEHVVTALFNLSIYDNNKILIMAAGAIDNIVEVLEFGKTMEARENAAAAIYSLSMIDDCKVQIGASSRAIPALVGLLKEGTIIGKRDAATALFNLAVYNPNKLSIVKSGAVTLLVELLMDDKAGITDDSLAVLAVLLGCSEGLEEIKNSKSLVPLLIDLLRFGSVKGKENSITLLLGLCKEEGELVAMRLLANPRSIPSLQSLAADGSLRARRKADALLRLLNRCCSQPHHSL.

A U-box domain is found at 292 to 366 (NIPDEFRCPI…HQWCYENNVK (75 aa)). ARM repeat units follow at residues 392–432 (SENK…LLAK), 435–474 (MDNR…NLSI), 476–516 (DNNK…SLSM), 519–558 (DCKV…NLAV), 560–599 (NPNK…VLLG), 601–641 (SEGL…GLCK), and 646–685 (LVAM…LLNR).

Interacts with LYK3. Binds to NORK/DMI2. In terms of processing, phosphorylated by LYK3 in vitro. Phosphorylated by NORK/DMI2. As to expression, present ubiquitously at very low levels during nonsymbiotic growth. Accumulates in roots and nodules during symbiotic growth with rhizobia and mycorrhiza.

It is found in the cell membrane. It carries out the reaction S-ubiquitinyl-[E2 ubiquitin-conjugating enzyme]-L-cysteine + [acceptor protein]-L-lysine = [E2 ubiquitin-conjugating enzyme]-L-cysteine + N(6)-ubiquitinyl-[acceptor protein]-L-lysine.. The protein operates within protein modification; protein ubiquitination. Exhibits U-box-dependent E3 ubiquitin ligase activity in vitro. Negatively modulates successive stages of infection and development of rhizobial (e.g. Sinorhizobium meliloti) and arbuscular mycorrhizal fungi (AM, e.g. Rhizophagus irregularis) symbioses, in an ubiquitin ligase activity-dependent manner. Negative regulator of the LYK3 signaling pathway leading to nitrogen-fixing symbiosis (e.g. infection and nodulation) by rhizobia. May be involved in the discrimination of rhizobium strains producing variant Nod factors. The protein is U-box domain-containing protein 1 of Medicago truncatula (Barrel medic).